A 62-amino-acid polypeptide reads, in one-letter code: Small ribosomal subunit protein eS27 (62 aa).

Positions 17, 20, 36, and 39 each coordinate Zn(2+). A C4-type zinc finger spans residues C17 to C39.

The protein belongs to the eukaryotic ribosomal protein eS27 family. Part of the 30S ribosomal subunit. Requires Zn(2+) as cofactor.

This chain is Small ribosomal subunit protein eS27, found in Methanosphaerula palustris (strain ATCC BAA-1556 / DSM 19958 / E1-9c).